We begin with the raw amino-acid sequence, 100 residues long: uncharacterized protein (100 aa).

This is an uncharacterized protein from Haemophilus influenzae (strain ATCC 51907 / DSM 11121 / KW20 / Rd).